We begin with the raw amino-acid sequence, 186 residues long: MINRNSGKDRDRSRSGDKELRINHRIKAREVRVIFNDGTQSVLPIEDAIKCARDVELDLVEISPNALPPVCKIIDYGKYKFHQEKRQKEQRKNQKIIKLKEVRMQPKIDTHDLDFKYKNILGFLKEGNKVKVTIRFRGRELAHTHLGYGILESILERVGDSNYVLESPAKMEGKTMFLIIAPKSRK.

The segment at 1–20 (MINRNSGKDRDRSRSGDKEL) is disordered.

Belongs to the IF-3 family. In terms of assembly, monomer.

The protein localises to the cytoplasm. IF-3 binds to the 30S ribosomal subunit and shifts the equilibrium between 70S ribosomes and their 50S and 30S subunits in favor of the free subunits, thus enhancing the availability of 30S subunits on which protein synthesis initiation begins. In Borrelia duttonii (strain Ly), this protein is Translation initiation factor IF-3.